The primary structure comprises 268 residues: Adenosylcobinamide-GDP ribazoletransferase (268 aa).

8 consecutive transmembrane segments (helical) span residues 1-21 (MAGNLLNGLRAAIAFLTTLPV), 36-56 (YLFIPVAIVTGLLLGVAGTLF), 59-79 (ILPAPFAAVLTVACIFLLTGI), 112-132 (AGGLLFMAMDLLFLFALAMTF), 138-158 (WLFVPLLVAEGCAKVAQITII), 182-202 (LAAVIGAWIAIGIAIIGAAII), 212-232 (IMAGGLAMLSPLAVALIILII), and 244-264 (VIGAANEIARIAALGVMGAVL).

The protein belongs to the CobS family. It depends on Mg(2+) as a cofactor.

The protein resides in the cell membrane. It catalyses the reaction alpha-ribazole + adenosylcob(III)inamide-GDP = adenosylcob(III)alamin + GMP + H(+). The catalysed reaction is alpha-ribazole 5'-phosphate + adenosylcob(III)inamide-GDP = adenosylcob(III)alamin 5'-phosphate + GMP + H(+). The protein operates within cofactor biosynthesis; adenosylcobalamin biosynthesis; adenosylcobalamin from cob(II)yrinate a,c-diamide: step 7/7. In terms of biological role, joins adenosylcobinamide-GDP and alpha-ribazole to generate adenosylcobalamin (Ado-cobalamin). Also synthesizes adenosylcobalamin 5'-phosphate from adenosylcobinamide-GDP and alpha-ribazole 5'-phosphate. This Methanocella arvoryzae (strain DSM 22066 / NBRC 105507 / MRE50) protein is Adenosylcobinamide-GDP ribazoletransferase.